Reading from the N-terminus, the 93-residue chain is Large ribosomal subunit protein bL36m (93 aa).

The transit peptide at 1-35 directs the protein to the mitochondrion; it reads MFLQTLRLTMPRMFLHMKPSPITITRACTVPSLLS.

It belongs to the bacterial ribosomal protein bL36 family. As to quaternary structure, component of the mitochondrial large ribosomal subunit (mt-LSU). Mature yeast 74S mitochondrial ribosomes consist of a small (37S) and a large (54S) subunit. The 37S small subunit contains a 15S ribosomal RNA (15S mt-rRNA) and 34 different proteins. The 54S large subunit contains a 21S rRNA (21S mt-rRNA) and 46 different proteins. bL36m has a zinc binding site.

It is found in the mitochondrion. Its function is as follows. Component of the mitochondrial ribosome (mitoribosome), a dedicated translation machinery responsible for the synthesis of mitochondrial genome-encoded proteins, including at least some of the essential transmembrane subunits of the mitochondrial respiratory chain. The mitoribosomes are attached to the mitochondrial inner membrane and translation products are cotranslationally integrated into the membrane. bL36m may be involved in a process influencing telomere capping. The polypeptide is Large ribosomal subunit protein bL36m (RTC6) (Saccharomyces cerevisiae (strain ATCC 204508 / S288c) (Baker's yeast)).